The primary structure comprises 79 residues: Small ribosomal subunit protein bS21 (79 aa).

2 stretches are compositionally biased toward basic residues: residues 47-59 (RKQAAAVKRHLKK) and 69-79 (GVGHRRKKSTT). The segment at 47 to 79 (RKQAAAVKRHLKKISRDVSSRRGVGHRRKKSTT) is disordered.

It belongs to the bacterial ribosomal protein bS21 family.

This Legionella pneumophila (strain Paris) protein is Small ribosomal subunit protein bS21.